We begin with the raw amino-acid sequence, 729 residues long: Leucine-rich repeat flightless-interacting protein 1 (729 aa).

Thr-2 is subject to N-acetylthreonine. Position 16 is a phosphoserine (Ser-16). Over residues 40 to 65 the composition is skewed to basic and acidic residues; sequence IRMKELERQQKEVEERPDKDFAEKGS. Residues 40–98 form a disordered region; sequence IRMKELERQQKEVEERPDKDFAEKGSRNMPSLSAATLASLGGTSSRRGSGDTSISMDTE. The span at 78–94 shows a compositional bias: low complexity; sequence SLGGTSSRRGSGDTSIS. Ser-83, Ser-84, Ser-88, Asp-90, Ser-92, and Thr-97 each carry phosphoserine. Residues 94–194 adopt a coiled-coil conformation; sequence SMDTEASIRE…LRQREEMLEK (101 aa). Residue Lys-249 forms a Glycyl lysine isopeptide (Lys-Gly) (interchain with G-Cter in SUMO1) linkage. The interval 253-729 is disordered; sequence VEKVGQRETL…SKSKEDCTMS (477 aa). A compositionally biased stretch (polar residues) spans 260 to 272; sequence ETLQNSEQEQPKP. The segment covering 277 to 297 has biased composition (basic and acidic residues); the sequence is DCVDRGVSHPGEKAENQRPAE. Ser-302 bears the Phosphoserine mark. A compositionally biased stretch (polar residues) spans 313–326; that stretch reads QQVQSQDQENTSDL. Residues 327-343 show a composition bias toward basic and acidic residues; it reads KNSEQIESHKVTNKSDS. Residues 344-354 show a composition bias toward polar residues; sequence RASNSPEQSSC. Ser-346 and Ser-348 each carry phosphoserine. 2 stretches are compositionally biased toward basic and acidic residues: residues 435 to 445 and 482 to 494; these read KGTENHGESCL and KADD…EKPI. Residues 465 to 567 form a DNA-binding region; that stretch reads EEAIVQIPQA…KNKKKKAATP (103 aa). Over residues 506 to 523 the composition is skewed to polar residues; the sequence is INQSGHQDTTGPGSTDAQ. Phosphoserine is present on residues Ser-538 and Ser-547. Basic residues predominate over residues 550 to 564; sequence KKTKNKKKKNKKKKA. Over residues 608–618 the composition is skewed to basic and acidic residues; it reads QKIRAGSREPV. Residues Ser-614 and Ser-670 each carry the phosphoserine modification. Composition is skewed to polar residues over residues 667–684 and 693–710; these read CDTS…SQHG and LDNS…SESG. A compositionally biased stretch (basic and acidic residues) spans 713-729; that stretch reads AREEVGNSKSKEDCTMS.

This sequence belongs to the LRRFIP family. In terms of assembly, homodimer. May also form higher oligomers. Interacts with FLII. Interacts with MYD88. Competes with FLII for MyD88-binding, even in the absence of LPS. Ubiquitously expressed.

The protein localises to the nucleus. The protein resides in the cytoplasm. In terms of biological role, transcriptional repressor which preferentially binds to the GC-rich consensus sequence (5'-AGCCCCCGGCG-3') and may regulate expression of TNF, EGFR and PDGFA. May control smooth muscle cells proliferation following artery injury through PDGFA repression. May also bind double-stranded RNA. Positively regulates Toll-like receptor (TLR) signaling in response to agonist probably by competing with the negative FLII regulator for MYD88-binding. The sequence is that of Leucine-rich repeat flightless-interacting protein 1 (Lrrfip1) from Mus musculus (Mouse).